A 118-amino-acid chain; its full sequence is Large ribosomal subunit protein bL20 (118 aa).

The protein belongs to the bacterial ribosomal protein bL20 family.

Functionally, binds directly to 23S ribosomal RNA and is necessary for the in vitro assembly process of the 50S ribosomal subunit. It is not involved in the protein synthesizing functions of that subunit. The protein is Large ribosomal subunit protein bL20 of Bacillus cytotoxicus (strain DSM 22905 / CIP 110041 / 391-98 / NVH 391-98).